A 314-amino-acid chain; its full sequence is Large ribosomal subunit protein uL10 (314 aa).

A disordered region spans residues 285–314; that stretch reads GAAAGGAAAEEEKEEEEESDEEGGFGDLFG. Over residues 293 to 308 the composition is skewed to acidic residues; the sequence is AEEEKEEEEESDEEGG. Residue serine 303 is modified to Phosphoserine; by CK1.

This sequence belongs to the universal ribosomal protein uL10 family. In terms of assembly, component of the large ribosomal subunit. P0 forms a pentameric complex by interaction with dimers of P1 and P2. In terms of processing, phosphorylated.

Ribosomal protein P0 is the functional equivalent of E.coli protein L10. The polypeptide is Large ribosomal subunit protein uL10 (Podospora anserina (Pleurage anserina)).